A 172-amino-acid chain; its full sequence is NADH-quinone oxidoreductase subunit B (172 aa).

Residues cysteine 46, cysteine 47, cysteine 111, and cysteine 141 each contribute to the [4Fe-4S] cluster site.

Belongs to the complex I 20 kDa subunit family. As to quaternary structure, NDH-1 is composed of 14 different subunits. Subunits NuoB, C, D, E, F, and G constitute the peripheral sector of the complex. [4Fe-4S] cluster serves as cofactor.

It is found in the cell membrane. The catalysed reaction is a quinone + NADH + 5 H(+)(in) = a quinol + NAD(+) + 4 H(+)(out). In terms of biological role, NDH-1 shuttles electrons from NADH, via FMN and iron-sulfur (Fe-S) centers, to quinones in the respiratory chain. The immediate electron acceptor for the enzyme in this species is believed to be a menaquinone. Couples the redox reaction to proton translocation (for every two electrons transferred, four hydrogen ions are translocated across the cytoplasmic membrane), and thus conserves the redox energy in a proton gradient. This chain is NADH-quinone oxidoreductase subunit B, found in Bacillus cytotoxicus (strain DSM 22905 / CIP 110041 / 391-98 / NVH 391-98).